The chain runs to 604 residues: Numb-like protein (604 aa).

4 disordered regions span residues 1–68 (MSRS…QWQA), 223–283 (GSFR…PVAA), 372–457 (ASAG…TLQP), and 531–604 (KAGA…EIEL). In terms of domain architecture, PID spans 74–225 (RKGTCSFPVR…RTSFAREGSF (152 aa)). Residues serine 224 and serine 228 each carry the phosphoserine modification. Basic and acidic residues predominate over residues 233–245 (PAEREAGDKKKAE). Low complexity predominate over residues 246 to 260 (AAAAPAVAPGPAQPG). Serine 263 carries the post-translational modification Phosphoserine. Position 279 is a phosphothreonine (threonine 279). The span at 409–418 (TPSEAERWLE) shows a compositional bias: basic and acidic residues. At serine 411 the chain carries Phosphoserine. Low complexity-rich tracts occupy residues 427–441 (QQQQ…QQQQ) and 542–552 (SAPGGQARPRP). Residues 553 to 568 (NGAPWPPEPAPAPAPE) are compositionally biased toward pro residues.

In terms of assembly, interacts (via PTB domain) with MAP3K7IP2 (via C-terminal). Interacts (via C-terminal) with TRAF6 (via TRAF domains). Associates with EPS15 and NOTCH1. As to expression, preferentially expressed in the nervous system. In the developing neocortex, expressed in postmitotic neurons in the cortical plate but not in progenitors within the ventricular zone.

It is found in the cytoplasm. In terms of biological role, plays a role in the process of neurogenesis. Required throughout embryonic neurogenesis to maintain neural progenitor cells, also called radial glial cells (RGCs), by allowing their daughter cells to choose progenitor over neuronal cell fate. Not required for the proliferation of neural progenitor cells before the onset of embryonic neurogenesis. Also required postnatally in the subventricular zone (SVZ) neurogenesis by regulating SVZ neuroblasts survival and ependymal wall integrity. Negative regulator of NF-kappa-B signaling pathway. The inhibition of NF-kappa-B activation is mediated at least in part, by preventing MAP3K7IP2 to interact with polyubiquitin chains of TRAF6 and RIPK1 and by stimulating the 'Lys-48'-linked polyubiquitination and degradation of TRAF6 in cortical neurons. This Mus musculus (Mouse) protein is Numb-like protein (Numbl).